Reading from the N-terminus, the 353-residue chain is Ferredoxin--NADP reductase 1 (353 aa).

Residues Thr-14, Asp-33, Gln-41, Tyr-46, Ala-86, Phe-121, Asp-289, and Thr-330 each contribute to the FAD site.

The protein belongs to the ferredoxin--NADP reductase type 2 family. As to quaternary structure, homodimer. It depends on FAD as a cofactor.

The enzyme catalyses 2 reduced [2Fe-2S]-[ferredoxin] + NADP(+) + H(+) = 2 oxidized [2Fe-2S]-[ferredoxin] + NADPH. The chain is Ferredoxin--NADP reductase 1 from Christiangramia forsetii (strain DSM 17595 / CGMCC 1.15422 / KT0803) (Gramella forsetii).